The following is a 1135-amino-acid chain: Envelopment polyprotein (1135 aa).

A signal peptide spans 1-35 (MRILKLLELVVKVSLFTIALSSVLLAFLIFRATDA). The Lumenal segment spans residues 36–314 (KVEIIRGDHP…KYSKSIYKQT (279 aa)). The short motif at 41–43 (RGD) is the Cell attachment site element. 2 disulfides stabilise this stretch: C114/C145 and C122/C156. N-linked (GlcNAc...) asparagine; by host glycosylation is present at N116. The interval 177–195 (LDKKRHFSVGGKFFISESL) is non-covalent dimerization. N-linked (GlcNAc...) asparagine; by host glycosylation occurs at N210. C224 and C285 are disulfide-bonded. The chain crosses the membrane as a helical span at residues 315-366 (ACINFSWIRLILIALLIYFPIRWLVNKTTKPLFLWYDLMGLITYPVLLLINC). At 367–484 (LWKYFPLKCS…VPGCPFLVTS (118 aa)) the chain is on the cytoplasmic side. The tract at residues 437–484 (LSLSLLKFVTEILIGLVILSQMPMSMAQTTQCLSGCFYVPGCPFLVTS) is signal for signal peptide peptidase. Residues 485–1067 (KFEKCSEKDQ…YFGSFFDTIR (583 aa)) lie on the Lumenal side of the membrane. N-linked (GlcNAc...) asparagine; by host glycans are attached at residues N605 and N980. A helical membrane pass occupies residues 1068–1088 (VVLLIAFIFLVTYFCSILTSI). Residues 1089-1135 (CKGYVKNESYKSRSKIEDDDEPEIKAPMLMKDTMTRRRPPMDFSHLV) are Cytoplasmic-facing.

The protein belongs to the tospovirus envelope glycoprotein family. As to quaternary structure, homodimer; disulfide-linked. Heterodimer with Glycoprotein C. Interacts with nucleoprotein. Heterodimer with Glycoprotein N. Interacts with nucleoprotein. Specific enzymatic cleavages in vivo yield mature proteins including Glycoprotein N and Glycoprotein C. In terms of processing, glycosylated with O-linked glycans. Glycosylation is essential for proper subcellular location. Post-translationally, cleaved at acidic pH.

Its subcellular location is the virion membrane. The protein resides in the host Golgi apparatus membrane. It is found in the host endoplasmic reticulum membrane. Forms the spikes present at the surface of the virion together with Glycoprotein C. They are able to attach the virion to a cell receptor and to promote fusion of membranes after endocytosis of the virion. Plays a role in virus binding and/or entry into the vector midgut. Its function is as follows. Forms the spikes present at the surface of the virion together with Glycoprotein N. They are able to attach the virion to a cell receptor and to promote fusion of membranes after endocytosis of the virion. Probable class II fusion protein. This is Envelopment polyprotein (GP) from Tomato spotted wilt virus (strain Brazilian Br-01) (TSWV).